Reading from the N-terminus, the 272-residue chain is Centromere protein V-like protein 1 (272 aa).

Residues 1-17 show a composition bias toward basic residues; sequence MGRVRNRATAQRRRRKR. 2 disordered regions span residues 1–23 and 65–95; these read MGRVRNRATAQRRRRKRPGDPPA and RRVRKAGPRDLLPSAPTPDPPGPAPSPKDLD. The span at 79-90 shows a compositional bias: pro residues; that stretch reads APTPDPPGPAPS. Residues 133-246 form the CENP-V/GFA domain; sequence HTGGCHCGAV…EEVGGGDPGE (114 aa). Residues C137, C139, C157, C159, C162, C201, and C204 each coordinate Zn(2+). The interval 240-272 is disordered; the sequence is GGGDPGEEAAEEHKAIHKTSSQSAPACPREQEQ.

Belongs to the Gfa family. Requires Zn(2+) as cofactor.

The protein is Centromere protein V-like protein 1 of Homo sapiens (Human).